Consider the following 331-residue polypeptide: MNNDNKRSAGGLGLVGDIGGTNARFALWRGQRLESIEVLACADYPRPELAVRDYLARIGESVANIDSVCLACAGPVGAADFRFTNNHWVINRAAFREELGLDHLLLVNDFSTMAWAASRLGADELVQVRAGSAQADRARLIIGPGTGLGVGSLLPLGGGRWEVLPCEGGHVDLPVTSPRDFALWQGLQARYGHVSAERALSGNGLLALYEISCALDGVAVRASSAAEVGALAMAGDAQADAVLEHFFLWLARVAGNAVLTVGALGGVYITGGIVPRFLERFIASGFAEAFASRGKTSGAYLQDVPVWVMTAEHPGLLGAGVALQQALDAEG.

ATP is bound at residue 16–21; the sequence is GDIGGT.

It belongs to the bacterial glucokinase family.

The protein localises to the cytoplasm. The enzyme catalyses D-glucose + ATP = D-glucose 6-phosphate + ADP + H(+). The polypeptide is Glucokinase (Pseudomonas aeruginosa (strain LESB58)).